The chain runs to 318 residues: MTSKLEQLRAMTTVVADTGDIEAVTRLKPVDCTTNPTIVLKALGTDMFADAFEEAIKWGKAKGGASDAVTEAIADRLAISVGAALAKIVPGRVSTEVDADLSFDTQASLNKARAIIAQYKERGIEKDRILIKLASTWEGIRAAEVLQKEGIDCNLTLLFSKAQAIACAEAKVFLISPFVGRILDWYKKSTGENYTSETDPGVVSVRQIYNFYKVNGIETIVMGASFRNAGEIEALAGCDRLTISPALLDELDAATGDLPRVLSPEKTTPDPLVSLDEKAFRWALNEDAMATEKLSEGIRAFAKDLGTLRGMVAKKLAA.

Lys-132 serves as the catalytic Schiff-base intermediate with substrate.

This sequence belongs to the transaldolase family. Type 1 subfamily. As to quaternary structure, homodimer.

The protein localises to the cytoplasm. The enzyme catalyses D-sedoheptulose 7-phosphate + D-glyceraldehyde 3-phosphate = D-erythrose 4-phosphate + beta-D-fructose 6-phosphate. It functions in the pathway carbohydrate degradation; pentose phosphate pathway; D-glyceraldehyde 3-phosphate and beta-D-fructose 6-phosphate from D-ribose 5-phosphate and D-xylulose 5-phosphate (non-oxidative stage): step 2/3. Functionally, transaldolase is important for the balance of metabolites in the pentose-phosphate pathway. In Allorhizobium ampelinum (strain ATCC BAA-846 / DSM 112012 / S4) (Agrobacterium vitis (strain S4)), this protein is Transaldolase.